The primary structure comprises 386 residues: tRNA-specific 2-thiouridylase MnmA (386 aa).

ATP is bound by residues 9–16 (GMSGGVDS) and M35. Residues 95 to 97 (NPD) are interaction with target base in tRNA. Catalysis depends on C100, which acts as the Nucleophile. A disulfide bond links C100 and C196. ATP is bound at residue G124. An interaction with tRNA region spans residues 146 to 148 (KDQ). The Cysteine persulfide intermediate role is filled by C196. The interval 308–309 (RY) is interaction with tRNA.

This sequence belongs to the MnmA/TRMU family.

Its subcellular location is the cytoplasm. It catalyses the reaction S-sulfanyl-L-cysteinyl-[protein] + uridine(34) in tRNA + AH2 + ATP = 2-thiouridine(34) in tRNA + L-cysteinyl-[protein] + A + AMP + diphosphate + H(+). Its function is as follows. Catalyzes the 2-thiolation of uridine at the wobble position (U34) of tRNA, leading to the formation of s(2)U34. This is tRNA-specific 2-thiouridylase MnmA from Burkholderia thailandensis (strain ATCC 700388 / DSM 13276 / CCUG 48851 / CIP 106301 / E264).